The chain runs to 152 residues: Aminoglycoside N(6')-acetyltransferase type 1 (152 aa).

Positions 5-152 (PLVRPVETTD…AQVRCFRKPL (148 aa)) constitute an N-acetyltransferase domain. Substrate is bound by residues tryptophan 26, tyrosine 73, glutamate 86, and aspartate 122. Asparagine 127 serves as a coordination point for acetyl-CoA.

Homodimer.

It catalyses the reaction kanamycin B + acetyl-CoA = N(6')-acetylkanamycin B + CoA + H(+). Catalyzes the transfer of an acetyl group from acetyl-CoA to the 6'-amino group of aminoglycoside molecules conferring resistance to antibiotics containing the purpurosamine ring including amikacin. The polypeptide is Aminoglycoside N(6')-acetyltransferase type 1 (aacA7) (Klebsiella aerogenes (Enterobacter aerogenes)).